Here is a 197-residue protein sequence, read N- to C-terminus: Peptidyl-tRNA hydrolase (197 aa).

Y21 provides a ligand contact to tRNA. Residue H26 is the Proton acceptor of the active site. TRNA contacts are provided by Y72, N74, and N120.

The protein belongs to the PTH family. As to quaternary structure, monomer.

The protein resides in the cytoplasm. It carries out the reaction an N-acyl-L-alpha-aminoacyl-tRNA + H2O = an N-acyl-L-amino acid + a tRNA + H(+). Hydrolyzes ribosome-free peptidyl-tRNAs (with 1 or more amino acids incorporated), which drop off the ribosome during protein synthesis, or as a result of ribosome stalling. Functionally, catalyzes the release of premature peptidyl moieties from peptidyl-tRNA molecules trapped in stalled 50S ribosomal subunits, and thus maintains levels of free tRNAs and 50S ribosomes. This Alkalilimnicola ehrlichii (strain ATCC BAA-1101 / DSM 17681 / MLHE-1) protein is Peptidyl-tRNA hydrolase.